The following is a 563-amino-acid chain: Inorganic phosphate transporter PT2 (563 aa).

Disordered stretches follow at residues 1–51 and 67–96; these read MAPR…SGEE and DGGANGVTYPVGGSRKEQDEISSRGPPAYS. Over 1-127 the chain is Extracellular; sequence MAPRYHSAAE…NGEKQSLLVP (127 aa). Residues 128–148 traverse the membrane as a helical segment; sequence CLAVFSSNYNFTVTSIALFLM. At 149–168 the chain is on the cytoplasmic side; the sequence is NQDPLYKDASDTVVGSSTVK. The helical transmembrane segment at 169-189 threads the bilayer; that stretch reads MLSYAGAIVGMCTMGYLGDLI. The Extracellular segment spans residues 190-192; it reads GRR. The chain crosses the membrane as a helical span at residues 193-213; it reads LAMILTLALVFIGALLSSICA. Over 214-217 the chain is Cytoplasmic; that stretch reads WGDG. A helical membrane pass occupies residues 218–238; it reads VTVLVIMGVCRFVLGVGSGGV. The Extracellular segment spans residues 239–263; sequence YPLSAVSAAEGAGSEKSNDRSMRVS. The chain crosses the membrane as a helical span at residues 264-284; that stretch reads WAYSMNVPGIMFPYIVALVLW. The Cytoplasmic portion of the chain corresponds to 285-291; it reads CTTHNVD. Residues 292 to 312 form a helical membrane-spanning segment; it reads VCFRILLGFGALPALLIWLPA. The Extracellular portion of the chain corresponds to 313–342; that stretch reads WRMKEDRAYVAKDFAKHLAGVFVSRSYWRQ. Residues 343-363 form a helical membrane-spanning segment; sequence LLGTGVCWLLYDVTAYGILLV. Over 364–380 the chain is Cytoplasmic; it reads QPEITQSIWGNSSSVTD. Residues 381–401 form a helical membrane-spanning segment; sequence VIWQNIILNGMGIPGCFMGIL. The Extracellular segment spans residues 402-412; it reads VLKQMGVKWLQ. Residues 413–433 traverse the membrane as a helical segment; sequence FWGFVGLAVSAFLMAATVEIL. The Cytoplasmic portion of the chain corresponds to 434-440; it reads QGKAWAQ. A helical transmembrane segment spans residues 441-461; the sequence is LVLLCIVNFFINWGASITTFI. Residues 462–477 are Extracellular-facing; that stretch reads LPSLVFPPEVRSTYSG. Residues 478 to 498 form a helical membrane-spanning segment; that stretch reads ISAALGKIGAVGGIYTMKAIL. Over 499 to 504 the chain is Cytoplasmic; sequence STGGLT. Residues 505 to 525 traverse the membrane as a helical segment; it reads PMMICAGVPSLAAAILTWFYV. At 526–563 the chain is on the extracellular side; that stretch reads DPVPNTLRSSFLQCFGSLAGSCPFIDCRKFRRGSRAFE.

The protein belongs to the major facilitator superfamily. Phosphate:H(+) symporter (TC 2.A.1.9) family.

Its subcellular location is the cell membrane. The enzyme catalyses phosphate(in) = phosphate(out). Its function is as follows. Inorganic phosphate transporter. Activity is likely sodium-independent. Exhibits higher activity under acidic pH, implying that either the monovalent form of phosphate is the preferred substrate or the transport activity is H(+)-dependent. The protein is Inorganic phosphate transporter PT2 of Toxoplasma gondii (strain ATCC 50861 / VEG).